Here is a 584-residue protein sequence, read N- to C-terminus: Arginine--tRNA ligase (584 aa).

The short motif at 129-139 is the 'HIGH' region element; it reads ANPTGPLHVGH.

It belongs to the class-I aminoacyl-tRNA synthetase family. Monomer.

It is found in the cytoplasm. It carries out the reaction tRNA(Arg) + L-arginine + ATP = L-arginyl-tRNA(Arg) + AMP + diphosphate. This is Arginine--tRNA ligase from Halorhodospira halophila (strain DSM 244 / SL1) (Ectothiorhodospira halophila (strain DSM 244 / SL1)).